The chain runs to 405 residues: Beta-citrylglutamate synthase B (405 aa).

The 186-residue stretch at 115–300 (FQELAGHGVP…VAGIVADFVL (186 aa)) folds into the ATP-grasp domain. ATP is bound by residues Lys-154, 189–199 (QEYVKESHGRD), and Arg-215. Mg(2+)-binding residues include Asp-260, Glu-273, and Asn-275. 3 residues coordinate Mn(2+): Asp-260, Glu-273, and Asn-275. Residues 359–387 (AMSTMSTSSTSSESEADLTETGPTPVGAN) are disordered. Low complexity predominate over residues 360–371 (MSTMSTSSTSSE).

The protein belongs to the RimK family. Requires Mg(2+) as cofactor. Mn(2+) serves as cofactor.

The protein localises to the cytoplasm. The catalysed reaction is citrate + L-glutamate + ATP = beta-citrylglutamate + ADP + phosphate + H(+). It catalyses the reaction N-acetyl-L-aspartate + L-glutamate + ATP = N-acetyl-L-aspartyl-L-glutamate + ADP + phosphate + H(+). Catalyzes the synthesis of beta-citryl-L-glutamate and N-acetyl-L-aspartyl-L-glutamate. Beta-citryl-L-glutamate is synthesized more efficiently than N-acetyl-L-aspartyl-L-glutamate. This chain is Beta-citrylglutamate synthase B (rimklb), found in Danio rerio (Zebrafish).